The following is a 574-amino-acid chain: K(+)/H(+) antiporter NhaP2 (574 aa).

13 helical membrane passes run 6 to 26 (INSFFLIGALLTAVSVLLSPM), 34 to 54 (ILLIFLAVGILAGEDGPGGIL), 58 to 78 (YSTAYLVSNFALAIILLDGGM), 87 to 107 (VALWPALSLATFGVAITTSIT), 109 to 129 (VMAAWLFDLHWLQGLLVGAIV), 173 to 193 (IAILANVGAELSASFMLISFI), 196 to 216 (FGLGVLLGLGGGWLLWKLVNV), 219 to 239 (LAEGLYSILVLSGGLMIYATS), 242 to 262 (LGGSGILSIYLVGLFLGNKPT), 271 to 291 (VLDGMTWVSQIGMFLVLGLLL), 299 to 319 (IWLPGLALAFGMILFARPLAV), 335 to 355 (WFISWVGLRGAVPIILAVFPM), and 359 to 379 (LPGAQLYFNLAFFVVIVSLLV). The RCK C-terminal domain occupies 405-486 (SGVEIYPKSE…LEALSNLFSQ (82 aa)).

This sequence belongs to the monovalent cation:proton antiporter 1 (CPA1) transporter (TC 2.A.36) family. NhaP2 subfamily.

Its subcellular location is the cell inner membrane. It carries out the reaction K(+)(in) + H(+)(out) = K(+)(out) + H(+)(in). Functionally, k(+)/H(+) antiporter that extrudes potassium in exchange for external protons and maintains the internal concentration of potassium under toxic levels. The protein is K(+)/H(+) antiporter NhaP2 of Shewanella oneidensis (strain ATCC 700550 / JCM 31522 / CIP 106686 / LMG 19005 / NCIMB 14063 / MR-1).